A 342-amino-acid chain; its full sequence is UDP-N-acetylglucosamine--N-acetylmuramyl-(pentapeptide) pyrophosphoryl-undecaprenol N-acetylglucosamine transferase (342 aa).

UDP-N-acetyl-alpha-D-glucosamine contacts are provided by residues Thr-10–Gly-12, Asn-124, Ser-177, and Gln-275.

It belongs to the glycosyltransferase 28 family. MurG subfamily.

Its subcellular location is the cell inner membrane. It catalyses the reaction di-trans,octa-cis-undecaprenyl diphospho-N-acetyl-alpha-D-muramoyl-L-alanyl-D-glutamyl-meso-2,6-diaminopimeloyl-D-alanyl-D-alanine + UDP-N-acetyl-alpha-D-glucosamine = di-trans,octa-cis-undecaprenyl diphospho-[N-acetyl-alpha-D-glucosaminyl-(1-&gt;4)]-N-acetyl-alpha-D-muramoyl-L-alanyl-D-glutamyl-meso-2,6-diaminopimeloyl-D-alanyl-D-alanine + UDP + H(+). It participates in cell wall biogenesis; peptidoglycan biosynthesis. In terms of biological role, cell wall formation. Catalyzes the transfer of a GlcNAc subunit on undecaprenyl-pyrophosphoryl-MurNAc-pentapeptide (lipid intermediate I) to form undecaprenyl-pyrophosphoryl-MurNAc-(pentapeptide)GlcNAc (lipid intermediate II). In Campylobacter jejuni subsp. jejuni serotype O:2 (strain ATCC 700819 / NCTC 11168), this protein is UDP-N-acetylglucosamine--N-acetylmuramyl-(pentapeptide) pyrophosphoryl-undecaprenol N-acetylglucosamine transferase.